Here is a 341-residue protein sequence, read N- to C-terminus: GDT1-like protein 1, chloroplastic (341 aa).

Low complexity predominate over residues 1–13 (MASVASSTVFASS). Disordered stretches follow at residues 1 to 41 (MASV…GRSV) and 54 to 76 (VVTR…GGGR). A chloroplast-targeting transit peptide spans 1–57 (MASVASSTVFASSLPHHRATTRAPPTPPRIPRRARLPGRSVVSCLPKRGSEKLVVTR). 7 helical membrane passes run 79–99 (PSLD…VLML), 117–137 (VVGD…LIFF), 158–178 (AIIF…SVVL), 203–223 (FLAA…AASG), 246–266 (GAGI…VFIA), 286–306 (LGVI…AVLG), and 318–338 (IVAY…LVEI).

Belongs to the GDT1 family.

It localises to the plastid. The protein resides in the chloroplast membrane. The sequence is that of GDT1-like protein 1, chloroplastic from Oryza sativa subsp. japonica (Rice).